Here is a 429-residue protein sequence, read N- to C-terminus: MAAIIVVGAQWGDEGKGKATDILGGKVDYVVKPNGGNNAGHTVVVGGEKYELKLLPAGVLSENATPIIGNGCVVNLEALFEEIDGLEARGANASRLRVSANAQLVAPYHVAIDRVAERFLGKRAIGTTGRGIGPTYADKVSRVGIRAQDLLDESILRQKIESALDQKNQILVKIYNRRAVDVDEVVEYFLSYADRLKPMLIDATTELNKALDAGKSVLMEGGQATMLDVDHGTYPFVTSSNPTTGGACVGTGIGPTRITASLGIIKAYTTRVGAGPFPTELFDKWGEFLQTTGGEVGVNTGRKRRCGWYDSVIARYASRVNGFTDYFLTKLDVLTGIGEIPICVAYDVDGVRHDEMPMTQTEFHHATPIYETMPAWDEDITDCKTFEELPEKAQDYVKRLEELSGCRISYIGVGPGRDQTIVINDVAEG.

GTP contacts are provided by residues 12 to 18 (GDEGKGK) and 40 to 42 (GHT). Asp13 acts as the Proton acceptor in catalysis. Mg(2+)-binding residues include Asp13 and Gly40. Residues 13-16 (DEGK), 38-41 (NAGH), Thr128, Arg142, Gln223, Thr238, and Arg302 contribute to the IMP site. The active-site Proton donor is His41. 298 to 304 (VNTGRKR) is a binding site for substrate. GTP contacts are provided by residues Arg304, 330–332 (KLD), and 412–414 (GVG).

Belongs to the adenylosuccinate synthetase family. As to quaternary structure, homodimer. Mg(2+) is required as a cofactor.

It is found in the cytoplasm. It catalyses the reaction IMP + L-aspartate + GTP = N(6)-(1,2-dicarboxyethyl)-AMP + GDP + phosphate + 2 H(+). Its pathway is purine metabolism; AMP biosynthesis via de novo pathway; AMP from IMP: step 1/2. Plays an important role in the de novo pathway of purine nucleotide biosynthesis. Catalyzes the first committed step in the biosynthesis of AMP from IMP. The sequence is that of Adenylosuccinate synthetase from Corynebacterium jeikeium (strain K411).